The following is a 489-amino-acid chain: CUGBP Elav-like family member 1-B (489 aa).

3 consecutive RRM domains span residues 16–99 (IKMF…PADS), 108–188 (RKLF…FADT), and 404–482 (ANLF…LKRS).

Belongs to the CELF/BRUNOL family. Oligomer. Oligomerization is required for RNA-binding and EDEN-dependent deadenylation. In terms of processing, phosphorylated during oocyte maturation and dephosphorylated following egg activation. Dephosphorylation is calcium dependent and correlates with the increase in the activity of EDEN-dependent deadenylation.

The protein localises to the nucleus. It localises to the cytoplasm. RNA-binding protein implicated in the regulation of several post-transcriptional events. May be involved in pre-mRNA alternative splicing, mRNA translation activation and stability. Mediates the rapid and sequence-specific cytoplasmic deadenylation of EDEN-containing maternal mRNAs following fertilization. Binds to AU-rich sequences (AREs) of jun mRNA. Binds to the embryonic deadenylation element (EDEN) motif localized in the 3'-UTR of maternal mRNAs. Binds to RNA containing several repeats of the consensus sequence 5'-UGU-3'. EDEN-dependent deadenylation is enhanced by the presence of an additional cis element composed of three AUU repeats. This Xenopus laevis (African clawed frog) protein is CUGBP Elav-like family member 1-B (cugbp1-b).